A 293-amino-acid polypeptide reads, in one-letter code: MSTTTTTLHTTTGTVYVADGTTDGKIGYYNHTDDSTNVIRKPIPIQVEDARTLSKSPTTKEEGYQLVDFHTKLPEGHFLDSKSPENKKVIEQVYFDECRRLVQEVTGAAEAYPYVYRVRNQEQNAKASNKSNFHTDFVPVVHVDRDDITAPQRLRASLGAEKAEMLLSKYKSYGSINVWRPVKNVVQKWPLMLVDHKSIENWDYSTHMFTLHSSNDERVATRGAKDHETILTHDKRYRYIYASDMTPDEAWLFFAFHSDPALGIPHGAFWDDSTKEEALTRCSIEVRIWVFFD.

The protein belongs to the asaB hydroxylase/desaturase family.

It participates in secondary metabolite biosynthesis. Functionally, oxidoreductase; part of the gene cluster that mediates the biosynthesis of squalestatin S1 (SQS1, also known as zaragozic acid A), a heavily oxidized fungal polyketide that offers potent cholesterol lowering activity by targeting squalene synthase (SS). SQS1 is composed of a 2,8-dioxobicyclic[3.2.1]octane-3,4,5-tricarboxyclic acid core that is connected to two lipophilic polyketide arms. These initial steps feature the priming of an unusual benzoic acid starter unit onto the highly reducing polyketide synthase clz14, followed by oxaloacetate extension and product release to generate a tricarboxylic acid containing product. The phenylalanine ammonia lyase (PAL) clz10 and the acyl-CoA ligase clz12 are involved in transforming phenylalanine into benzoyl-CoA. The citrate synthase-like protein clz17 is involved in connecting the C-alpha-carbons of the hexaketide chain and oxaloacetate to afford the tricarboxylic acid unit. The potential hydrolytic enzymes, clz11 and clz13, are in close proximity to pks2 and may participate in product release. On the other side, the tetraketide arm is synthesized by a the squalestatin tetraketide synthase clz2 and enzymatically esterified to the core in the last biosynthetic step, by the acetyltransferase clz6. The biosynthesis of the tetraketide must involve 3 rounds of chain extension. After the first and second rounds methyl-transfer occurs, and in all rounds of extension the ketoreductase and dehydratase are active. The enoyl reductase and C-MeT of clz2 are not active in the final round of extension. The acetyltransferase clz6 appears to have a broad substrate selectivity for its acyl CoA substrate, allowing the in vitro synthesis of novel squalestatins. The biosynthesis of SQS1 requires several oxidative steps likely performed by oxidoreductases clz3, clz15 and clz16. Finally, in support of the identification of the cluster as being responsible for SQS1 production, the cluster contains a gene encoding a putative squalene synthase (SS) clz20, suggesting a likely mechanism for self-resistance. The chain is Oxidoreductase clz16 from Cochliobolus lunatus (Filamentous fungus).